We begin with the raw amino-acid sequence, 84 residues long: Large ribosomal subunit protein uL23 (84 aa).

Belongs to the universal ribosomal protein uL23 family. In terms of assembly, part of the 50S ribosomal subunit. Contacts protein L29.

Functionally, binds to 23S rRNA. One of the proteins that surrounds the polypeptide exit tunnel on the outside of the ribosome. The chain is Large ribosomal subunit protein uL23 from Halobacterium salinarum (strain ATCC 700922 / JCM 11081 / NRC-1) (Halobacterium halobium).